A 551-amino-acid chain; its full sequence is Arginine--tRNA ligase (551 aa).

The 'HIGH' region motif lies at 124-134 (ANPTGPLHIGH).

Belongs to the class-I aminoacyl-tRNA synthetase family. In terms of assembly, monomer.

It is found in the cytoplasm. It catalyses the reaction tRNA(Arg) + L-arginine + ATP = L-arginyl-tRNA(Arg) + AMP + diphosphate. The chain is Arginine--tRNA ligase from Solidesulfovibrio magneticus (strain ATCC 700980 / DSM 13731 / RS-1) (Desulfovibrio magneticus).